An 813-amino-acid polypeptide reads, in one-letter code: Tax1-binding protein 1 homolog (813 aa).

Phosphoserine occurs at positions 124, 138, and 225. Residues 144 to 596 (TTKAGLLELK…SYSLQLAEKD (453 aa)) are a coiled coil. An oligomerization region spans residues 320-420 (EEIGKLQSCL…ELQLHAVKTD (101 aa)). Position 618 is a phosphoserine; by IKKA (Ser618). A Phosphoserine modification is found at Ser631. Residues 667–732 (AHETRDGADG…NVPIPPDPAN (66 aa)) form a disordered region. A Phosphoserine; by IKKA modification is found at Ser692. 2 consecutive UBZ1-type zinc fingers follow at residues 751-777 (HKKC…VESH) and 778-804 (WKVC…VQTH). Residues Cys754, Cys757, His773, His777, Cys781, Cys784, His800, and His804 each coordinate Zn(2+).

Homooligomer. Interacts with TNFAIP3. Interacts with STARD13. Interacts with MYO6. Interacts with TOM1; the interaction is indirect and is mediated by MYO6, which acts as a bridge between TOM1 and TAX1BP1. Interacts with MAVS; this interaction induces MAVS polyubiquitination. Interacts with TNIP1. Interacts with TRAF6; this interaction mediates deubiquitination of TRAF6 and inhibition of NF-kappa-B activation. Interacts with RIPK1; this interaction negatively regulates RIPK1 ubiquitination. Interacts with NBR1. Interacts with TBK1. Interacts with RB1CC1. Interacts with SQSTM1. Interacts with AZI2. Interacts with TICAM1 and TRIM32; these interactions target TICAM1 to TAX1BP1-mediated selective autophagic degradation. In terms of processing, phosphorylated in the C-terminal region by CHUK/IKKA leading to NF-kappa-B signaling down-regulation.

The protein localises to the cytoplasm. Its subcellular location is the mitochondrion. It is found in the preautophagosomal structure. The protein resides in the cytoplasmic vesicle. It localises to the autophagosome. Ubiquitin-binding adapter that participates in inflammatory, antiviral and innate immune processes as well as selective autophagy regulation. Plays a key role in the negative regulation of NF-kappa-B and IRF3 signalings by acting as an adapter for the ubiquitin-editing enzyme A20/TNFAIP3 to bind and inactivate its substrates. Disrupts the interactions between the E3 ubiquitin ligase TRAF3 and TBK1/IKBKE to attenuate 'Lys63'-linked polyubiquitination of TBK1 and thereby IFN-beta production. Also recruits A20/TNFAIP3 to ubiquitinated signaling proteins TRAF6 and RIPK1, leading to their deubiquitination and disruption of IL-1 and TNF-induced NF-kappa-B signaling pathways. Inhibits virus-induced apoptosis by inducing the 'Lys-48'-linked polyubiquitination and degradation of MAVS via recruitment of the E3 ligase ITCH, thereby attenuating MAVS-mediated apoptosis signaling. As a macroautophagy/autophagy receptor, facilitates the xenophagic clearance of pathogenic bacteria such as Salmonella typhimurium and Mycobacterium tuberculosis. Upon NBR1 recruitment to the SQSTM1-ubiquitin condensates, acts as the major recruiter of RB1CC1 to these ubiquitin condensates to promote their autophagic degradation. Mediates the autophagic degradation of other substrates including TICAM1. The polypeptide is Tax1-binding protein 1 homolog (Tax1bp1) (Rattus norvegicus (Rat)).